The primary structure comprises 164 residues: Anterior gradient protein 2-B (164 aa).

A signal peptide spans 1 to 20 (MESVLKSLFVLLVATSFTLA). Short sequence motifs (homodimer stabilization; interchain) lie at residues 34–43 (SRGWGDNLEW) and 49–56 (EGLYKAKA).

The protein belongs to the AGR family. Monomer and homodimer.

Its subcellular location is the secreted. The protein resides in the endoplasmic reticulum. The protein is Anterior gradient protein 2-B (agr2-b) of Xenopus laevis (African clawed frog).